The chain runs to 216 residues: MTRLLHIQCSPRLRRSASLEIAHSFIQSYRQQRPDTEVTTLDLWSLDLPELDQTAMDAKYAQLAGQPLGNAEQRAWARLQALAEPLHQADLLVLSIPLWNFSIPYKLKHFIDLVSHQGILFSFDPENSLQGLLRNKTAVAAYARGLDFSSRSSTPAPAFDFQKPYIEAWLNFIGIANQHSLIVEKTILGPDIDQASRQAAAEQAQALAQQLAARQY.

Residues S10 and 16–18 contribute to the FMN site; that span reads SAS.

This sequence belongs to the azoreductase type 1 family. In terms of assembly, homodimer. FMN is required as a cofactor.

The enzyme catalyses 2 a quinone + NADH + H(+) = 2 a 1,4-benzosemiquinone + NAD(+). The catalysed reaction is N,N-dimethyl-1,4-phenylenediamine + anthranilate + 2 NAD(+) = 2-(4-dimethylaminophenyl)diazenylbenzoate + 2 NADH + 2 H(+). In terms of biological role, quinone reductase that provides resistance to thiol-specific stress caused by electrophilic quinones. Also exhibits azoreductase activity. Catalyzes the reductive cleavage of the azo bond in aromatic azo compounds to the corresponding amines. The protein is FMN-dependent NADH:quinone oxidoreductase 3 of Pseudomonas fluorescens (strain ATCC BAA-477 / NRRL B-23932 / Pf-5).